We begin with the raw amino-acid sequence, 306 residues long: MAAPIPQGFSCLSRFLGWWFRQPVLVTQSAAIVPVRTKKRFTPPIYQPKFKTEKEFMQHARKAGLVIPPEKSDRSIHLACTAGIFDAYVPPEGDARISSLSKEGLIERTERMKKTMASQVSIRRIKDYDANFKIKDFPEKAKDIFIEAHLCLNNSDHDRLHTLVTEHCFPDMTWDIKYKTVRWSFVESLEPSHVVQVRCSSMMNQGNVYGQITVRMHTRQTLAIYDRFGRLMYGQEDVPKDVLEYVVFEKQLTNPYGSWRMHTKIVPPWAPPKQPILKTVMIPGPQLKPEEEYEEAQGEAQKPQLA.

Residues L287–A306 are disordered.

Belongs to the mitochondrion-specific ribosomal protein mL45 family. In terms of assembly, component of the mitochondrial large ribosomal subunit (mt-LSU). Mature mammalian 55S mitochondrial ribosomes consist of a small (28S) and a large (39S) subunit. The 28S small subunit contains a 12S ribosomal RNA (12S mt-rRNA) and 30 different proteins. The 39S large subunit contains a 16S rRNA (16S mt-rRNA), a copy of mitochondrial valine transfer RNA (mt-tRNA(Val)), which plays an integral structural role, and 52 different proteins.

Its subcellular location is the mitochondrion. Functionally, component of the mitochondrial large ribosomal subunit (mt-LSU). Within the mitochondrial ribosomes, required to direct the nascent polypeptide toward the tunnel exit and position the exit at a distance from the membrane surface. This Homo sapiens (Human) protein is Large ribosomal subunit protein mL45.